Here is a 555-residue protein sequence, read N- to C-terminus: Formate--tetrahydrofolate ligase (555 aa).

65-72 (TPAGEGKT) contributes to the ATP binding site.

It belongs to the formate--tetrahydrofolate ligase family.

The enzyme catalyses (6S)-5,6,7,8-tetrahydrofolate + formate + ATP = (6R)-10-formyltetrahydrofolate + ADP + phosphate. It participates in one-carbon metabolism; tetrahydrofolate interconversion. The protein is Formate--tetrahydrofolate ligase of Caldanaerobacter subterraneus subsp. tengcongensis (strain DSM 15242 / JCM 11007 / NBRC 100824 / MB4) (Thermoanaerobacter tengcongensis).